The following is a 431-amino-acid chain: Enolase (431 aa).

Residue Gln-167 participates in (2R)-2-phosphoglycerate binding. Catalysis depends on Glu-209, which acts as the Proton donor. Residues Asp-246, Glu-289, and Asp-316 each coordinate Mg(2+). (2R)-2-phosphoglycerate-binding residues include Lys-341, Arg-370, Ser-371, and Lys-392. The active-site Proton acceptor is the Lys-341.

It belongs to the enolase family. Component of the RNA degradosome, a multiprotein complex involved in RNA processing and mRNA degradation. It depends on Mg(2+) as a cofactor.

It is found in the cytoplasm. The protein resides in the secreted. It localises to the cell surface. The enzyme catalyses (2R)-2-phosphoglycerate = phosphoenolpyruvate + H2O. The protein operates within carbohydrate degradation; glycolysis; pyruvate from D-glyceraldehyde 3-phosphate: step 4/5. In terms of biological role, catalyzes the reversible conversion of 2-phosphoglycerate (2-PG) into phosphoenolpyruvate (PEP). It is essential for the degradation of carbohydrates via glycolysis. This is Enolase from Shewanella baltica (strain OS223).